A 140-amino-acid chain; its full sequence is Ergosterol biosynthetic protein 28 homolog (140 aa).

Transmembrane regions (helical) follow at residues 4-24, 52-72, 79-99, and 105-125; these read FLNV…GNTL, TFGI…IDIH, ITLW…FVYG, and IGVL…LVGL.

It belongs to the ERG28 family. In terms of tissue distribution, ubiquitous; strongly expressed in testis and some cancer cell lines.

Its subcellular location is the endoplasmic reticulum membrane. This is Ergosterol biosynthetic protein 28 homolog from Homo sapiens (Human).